The sequence spans 112 residues: Carboxysome shell protein CcmK4 (112 aa).

In terms of domain architecture, BMC spans 6 to 92; sequence AVGSIETIGF…PHENVVAVLP (87 aa).

This sequence belongs to the bacterial microcompartments protein family. CcmK subfamily. As to quaternary structure, homohexamer. Interacts with full-length CcmM. Forms mixed heterohexamers with CcmK3, probably with 1:5 CcmK3:CcmK4 stoichiometry. Only very weak interactions with CcmK1 and CcmK2 were seen.

The protein resides in the carboxysome. Its function is as follows. A probably minor shell protein component of the carboxysome, a polyhedral inclusion where RuBisCO (ribulose bisphosphate carboxylase, rbcL-rbcS) is sequestered. The central pore probably regulates metabolite flux, as might the gaps between assembled homohexamers. Homohexamers make sheets that probably form the facets of the polyhedral carboxysome. This subunit probably makes both homohexamers and heterohexamers with CcmK3. The sequence is that of Carboxysome shell protein CcmK4 from Synechocystis sp. (strain ATCC 27184 / PCC 6803 / Kazusa).